The following is a 430-amino-acid chain: 3-phosphoshikimate 1-carboxyvinyltransferase (430 aa).

3-phosphoshikimate is bound by residues Lys23, Ser24, and Arg28. Lys23 serves as a coordination point for phosphoenolpyruvate. 2 residues coordinate phosphoenolpyruvate: Gly95 and Arg123. 3-phosphoshikimate contacts are provided by Ser169, Gln171, Asp315, and Lys342. Position 171 (Gln171) interacts with phosphoenolpyruvate. Asp315 (proton acceptor) is an active-site residue. Positions 346 and 388 each coordinate phosphoenolpyruvate.

Belongs to the EPSP synthase family. In terms of assembly, monomer.

It localises to the cytoplasm. It catalyses the reaction 3-phosphoshikimate + phosphoenolpyruvate = 5-O-(1-carboxyvinyl)-3-phosphoshikimate + phosphate. Its pathway is metabolic intermediate biosynthesis; chorismate biosynthesis; chorismate from D-erythrose 4-phosphate and phosphoenolpyruvate: step 6/7. Its function is as follows. Catalyzes the transfer of the enolpyruvyl moiety of phosphoenolpyruvate (PEP) to the 5-hydroxyl of shikimate-3-phosphate (S3P) to produce enolpyruvyl shikimate-3-phosphate and inorganic phosphate. The polypeptide is 3-phosphoshikimate 1-carboxyvinyltransferase (Streptococcus pyogenes serotype M2 (strain MGAS10270)).